Reading from the N-terminus, the 526-residue chain is Meiotically up-regulated gene 99 protein, mitochondrial (526 aa).

Transmembrane regions (helical) follow at residues 398-418 (TLYT…LYFV) and 421-441 (FSLY…LYYL).

It is found in the mitochondrion membrane. In terms of biological role, required for correct meiotic chromosome segregation. Appears to also have role in sporulation. In Schizosaccharomyces pombe (strain 972 / ATCC 24843) (Fission yeast), this protein is Meiotically up-regulated gene 99 protein, mitochondrial (mug99).